The primary structure comprises 119 residues: Immunoglobulin heavy variable 3-15 (119 aa).

The signal sequence occupies residues 1–19; it reads MEFGLSWIFLAAILKGVQC. The framework-1 stretch occupies residues 20 to 44; the sequence is EVQLVESGGGLVKPGGSLRLSCAAS. In terms of domain architecture, Ig-like spans 20-119; the sequence is EVQLVESGGG…EDTAVYYCTT (100 aa). Residues Cys-41 and Cys-117 are joined by a disulfide bond. Positions 45-52 are complementarity-determining-1; the sequence is GFTFSNAW. Residues 53–69 form a framework-2 region; it reads MSWVRQAPGKGLEWVGR. Residues 70–79 form a complementarity-determining-2 region; it reads IKSKTDGGTT. Residues 80-117 are framework-3; the sequence is DYAAPVKGRFTISRDDSKNTLYLQMNSLKTEDTAVYYC. Positions 118–119 are complementarity-determining-3; the sequence is TT.

As to quaternary structure, immunoglobulins are composed of two identical heavy chains and two identical light chains; disulfide-linked.

It localises to the secreted. The protein resides in the cell membrane. In terms of biological role, v region of the variable domain of immunoglobulin heavy chains that participates in the antigen recognition. Immunoglobulins, also known as antibodies, are membrane-bound or secreted glycoproteins produced by B lymphocytes. In the recognition phase of humoral immunity, the membrane-bound immunoglobulins serve as receptors which, upon binding of a specific antigen, trigger the clonal expansion and differentiation of B lymphocytes into immunoglobulins-secreting plasma cells. Secreted immunoglobulins mediate the effector phase of humoral immunity, which results in the elimination of bound antigens. The antigen binding site is formed by the variable domain of one heavy chain, together with that of its associated light chain. Thus, each immunoglobulin has two antigen binding sites with remarkable affinity for a particular antigen. The variable domains are assembled by a process called V-(D)-J rearrangement and can then be subjected to somatic hypermutations which, after exposure to antigen and selection, allow affinity maturation for a particular antigen. In Homo sapiens (Human), this protein is Immunoglobulin heavy variable 3-15.